The following is a 261-amino-acid chain: Zinc finger protein 664 (261 aa).

C2H2-type zinc fingers lie at residues 3–25 (YKCP…QKIH), 31–53 (HKCD…WRDH), 59–81 (YKCD…KKIH), 87–109 (YKCY…MRVH), 115–137 (YVCS…QRVH), 143–165 (FKCE…QRVH), 171–193 (YKCY…QRVH), 199–221 (YRCC…QRVH), and 227–249 (FKCD…QRVH). K257 is covalently cross-linked (Glycyl lysine isopeptide (Lys-Gly) (interchain with G-Cter in SUMO2)).

It belongs to the krueppel C2H2-type zinc-finger protein family.

It localises to the nucleus. Functionally, may be involved in transcriptional regulation. This is Zinc finger protein 664 (Znf664) from Mus musculus (Mouse).